Consider the following 563-residue polypeptide: Arginine--tRNA ligase (563 aa).

A 'HIGH' region motif is present at residues proline 122 to histidine 132.

It belongs to the class-I aminoacyl-tRNA synthetase family. In terms of assembly, monomer.

It is found in the cytoplasm. The catalysed reaction is tRNA(Arg) + L-arginine + ATP = L-arginyl-tRNA(Arg) + AMP + diphosphate. The protein is Arginine--tRNA ligase of Latilactobacillus sakei subsp. sakei (strain 23K) (Lactobacillus sakei subsp. sakei).